The primary structure comprises 458 residues: UDP-N-acetylmuramoylalanine--D-glutamate ligase (458 aa).

124–130 (GSDGKTT) is an ATP binding site.

Belongs to the MurCDEF family.

Its subcellular location is the cytoplasm. It catalyses the reaction UDP-N-acetyl-alpha-D-muramoyl-L-alanine + D-glutamate + ATP = UDP-N-acetyl-alpha-D-muramoyl-L-alanyl-D-glutamate + ADP + phosphate + H(+). It participates in cell wall biogenesis; peptidoglycan biosynthesis. Functionally, cell wall formation. Catalyzes the addition of glutamate to the nucleotide precursor UDP-N-acetylmuramoyl-L-alanine (UMA). The protein is UDP-N-acetylmuramoylalanine--D-glutamate ligase of Clostridium botulinum (strain ATCC 19397 / Type A).